We begin with the raw amino-acid sequence, 508 residues long: Photosystem II CP47 reaction center protein (508 aa).

The next 6 helical transmembrane spans lie at 21 to 36 (AVHL…WAGS), 101 to 115 (IVLS…IWHW), 140 to 156 (GIHL…FGAF), 203 to 218 (IAAG…FHLC), 237 to 252 (VLSS…AFVV), and 457 to 472 (CFAL…HGAR).

It belongs to the PsbB/PsbC family. PsbB subfamily. In terms of assembly, PSII is composed of 1 copy each of membrane proteins PsbA, PsbB, PsbC, PsbD, PsbE, PsbF, PsbH, PsbI, PsbJ, PsbK, PsbL, PsbM, PsbT, PsbX, PsbY, PsbZ, Psb30/Ycf12, at least 3 peripheral proteins of the oxygen-evolving complex and a large number of cofactors. It forms dimeric complexes. The cofactor is Binds multiple chlorophylls. PSII binds additional chlorophylls, carotenoids and specific lipids..

It is found in the plastid. The protein localises to the chloroplast thylakoid membrane. Functionally, one of the components of the core complex of photosystem II (PSII). It binds chlorophyll and helps catalyze the primary light-induced photochemical processes of PSII. PSII is a light-driven water:plastoquinone oxidoreductase, using light energy to abstract electrons from H(2)O, generating O(2) and a proton gradient subsequently used for ATP formation. The polypeptide is Photosystem II CP47 reaction center protein (Chlorella vulgaris (Green alga)).